Consider the following 187-residue polypeptide: MVSTTTFLMLTSLATLTSARSHLTVTIGSNCTLKGPQGGHVFWWRIYDNGWFTKPCDQPGRFFCNGRDLTIINVTANDKGFYYGTDYKSSLDYNIIVLPSTTPPPRTTTFSSSSVANNTISNPTFAALLKRTVNNSTTSHTTISTSTISIIAAVTIGISILVFTITYYACCYRKDKHKGDPLLRFDI.

N-linked (GlcNAc...) asparagine; by host glycans are attached at residues N30, N73, N117, N134, and N135.

Belongs to the adenoviridae E3_20 family.

This Human adenovirus B serotype 35 (HAdV-35) protein is Early E3 20.6 kDa glycoprotein.